Reading from the N-terminus, the 256-residue chain is Hydroxyethylthiazole kinase (256 aa).

Met-37 contacts substrate. ATP is bound by residues Lys-113 and Thr-159. Gly-186 provides a ligand contact to substrate.

It belongs to the Thz kinase family. Requires Mg(2+) as cofactor.

The catalysed reaction is 5-(2-hydroxyethyl)-4-methylthiazole + ATP = 4-methyl-5-(2-phosphooxyethyl)-thiazole + ADP + H(+). The protein operates within cofactor biosynthesis; thiamine diphosphate biosynthesis; 4-methyl-5-(2-phosphoethyl)-thiazole from 5-(2-hydroxyethyl)-4-methylthiazole: step 1/1. Functionally, catalyzes the phosphorylation of the hydroxyl group of 4-methyl-5-beta-hydroxyethylthiazole (THZ). The polypeptide is Hydroxyethylthiazole kinase (Exiguobacterium sibiricum (strain DSM 17290 / CCUG 55495 / CIP 109462 / JCM 13490 / 255-15)).